The sequence spans 157 residues: Small ribosomal subunit protein uS7 (157 aa).

It belongs to the universal ribosomal protein uS7 family. Part of the 30S ribosomal subunit. Contacts proteins S9 and S11.

One of the primary rRNA binding proteins, it binds directly to 16S rRNA where it nucleates assembly of the head domain of the 30S subunit. Is located at the subunit interface close to the decoding center, probably blocks exit of the E-site tRNA. The chain is Small ribosomal subunit protein uS7 from Koribacter versatilis (strain Ellin345).